A 206-amino-acid polypeptide reads, in one-letter code: Probable nicotinate-nucleotide adenylyltransferase (206 aa).

Belongs to the NadD family.

The enzyme catalyses nicotinate beta-D-ribonucleotide + ATP + H(+) = deamido-NAD(+) + diphosphate. Its pathway is cofactor biosynthesis; NAD(+) biosynthesis; deamido-NAD(+) from nicotinate D-ribonucleotide: step 1/1. Functionally, catalyzes the reversible adenylation of nicotinate mononucleotide (NaMN) to nicotinic acid adenine dinucleotide (NaAD). This Gloeobacter violaceus (strain ATCC 29082 / PCC 7421) protein is Probable nicotinate-nucleotide adenylyltransferase.